The sequence spans 242 residues: Probable 2-phosphosulfolactate phosphatase (242 aa).

It belongs to the ComB family. Mg(2+) is required as a cofactor.

The catalysed reaction is (2R)-O-phospho-3-sulfolactate + H2O = (2R)-3-sulfolactate + phosphate. The polypeptide is Probable 2-phosphosulfolactate phosphatase (Picosynechococcus sp. (strain ATCC 27264 / PCC 7002 / PR-6) (Agmenellum quadruplicatum)).